The following is a 314-amino-acid chain: Hydroxyethylthiazole kinase (314 aa).

Met70 contributes to the substrate binding site. ATP is bound by residues Arg145 and Ser217. Substrate is bound at residue Gly244.

The protein belongs to the Thz kinase family. It depends on Mg(2+) as a cofactor.

The catalysed reaction is 5-(2-hydroxyethyl)-4-methylthiazole + ATP = 4-methyl-5-(2-phosphooxyethyl)-thiazole + ADP + H(+). It participates in cofactor biosynthesis; thiamine diphosphate biosynthesis; 4-methyl-5-(2-phosphoethyl)-thiazole from 5-(2-hydroxyethyl)-4-methylthiazole: step 1/1. Functionally, catalyzes the phosphorylation of the hydroxyl group of 4-methyl-5-beta-hydroxyethylthiazole (THZ). The sequence is that of Hydroxyethylthiazole kinase from Bifidobacterium longum (strain NCC 2705).